We begin with the raw amino-acid sequence, 174 residues long: MAGQSRPDLIRIGQVTAPHGVRGAVRVYPTTDFPERFVTLKRVMIDGPDRAVGARFRGFVKNLVILELEGITDRNQAERLRGADLLVPREEVHPLPEGYYYDFDIIGIEVVDPDGRQLGRVVEVDHTSPVHDLYVVETAPGKRYLVPAVRRFVKEIDLETGRMVIDPIPGLLED.

One can recognise a PRC barrel domain in the interval 97-171 (EGYYYDFDII…RMVIDPIPGL (75 aa)).

The protein belongs to the RimM family. As to quaternary structure, binds ribosomal protein uS19.

It localises to the cytoplasm. In terms of biological role, an accessory protein needed during the final step in the assembly of 30S ribosomal subunit, possibly for assembly of the head region. Essential for efficient processing of 16S rRNA. May be needed both before and after RbfA during the maturation of 16S rRNA. It has affinity for free ribosomal 30S subunits but not for 70S ribosomes. This chain is Ribosome maturation factor RimM, found in Symbiobacterium thermophilum (strain DSM 24528 / JCM 14929 / IAM 14863 / T).